A 395-amino-acid polypeptide reads, in one-letter code: L-lactate dehydrogenase (395 aa).

In terms of domain architecture, FMN hydroxy acid dehydrogenase spans 1 to 380 (MIISAASDYR…SKDSLVQELS (380 aa)). Y24 is a substrate binding site. Positions 106 and 127 each coordinate FMN. Y129 provides a ligand contact to substrate. T155 lines the FMN pocket. R164 contacts substrate. K251 serves as a coordination point for FMN. Catalysis depends on H275, which acts as the Proton acceptor. R278 serves as a coordination point for substrate. 306-330 (DSGIRNGLDVVRMIALGADSVLLGR) contacts FMN.

The protein belongs to the FMN-dependent alpha-hydroxy acid dehydrogenase family. FMN is required as a cofactor.

The protein resides in the cell inner membrane. The enzyme catalyses (S)-lactate + A = pyruvate + AH2. Catalyzes the conversion of L-lactate to pyruvate. Is coupled to the respiratory chain. This chain is L-lactate dehydrogenase, found in Enterobacter sp. (strain 638).